Consider the following 277-residue polypeptide: Shikimate dehydrogenase (NADP(+)) (277 aa).

Shikimate is bound by residues 17–19 (SRS) and T64. The Proton acceptor role is filled by K68. N88 and D103 together coordinate shikimate. Residues 128–132 (GAGGS) and L217 contribute to the NADP(+) site. Y219 provides a ligand contact to shikimate. G240 is an NADP(+) binding site.

Belongs to the shikimate dehydrogenase family. Homodimer.

It carries out the reaction shikimate + NADP(+) = 3-dehydroshikimate + NADPH + H(+). It functions in the pathway metabolic intermediate biosynthesis; chorismate biosynthesis; chorismate from D-erythrose 4-phosphate and phosphoenolpyruvate: step 4/7. In terms of biological role, involved in the biosynthesis of the chorismate, which leads to the biosynthesis of aromatic amino acids. Catalyzes the reversible NADPH linked reduction of 3-dehydroshikimate (DHSA) to yield shikimate (SA). The polypeptide is Shikimate dehydrogenase (NADP(+)) (Afipia carboxidovorans (strain ATCC 49405 / DSM 1227 / KCTC 32145 / OM5) (Oligotropha carboxidovorans)).